Consider the following 423-residue polypeptide: Putative RING-H2 finger protein ATL49 (423 aa).

A helical transmembrane segment spans residues 43-63; it reads ILLIIIILSIIFFISGLLHIL. The RING-type; atypical zinc finger occupies 126 to 168; sequence CPVCLCEFETEDKLRLLPKCSHAFHVECIDTWLLSHSTCPLCR. 2 disordered regions span residues 213–236 and 377–399; these read NNDS…DMDG and HRIP…KTPS. Residues 379 to 389 show a composition bias toward basic and acidic residues; it reads IPPEESLKSEN.

Belongs to the RING-type zinc finger family. ATL subfamily.

Its subcellular location is the membrane. The catalysed reaction is S-ubiquitinyl-[E2 ubiquitin-conjugating enzyme]-L-cysteine + [acceptor protein]-L-lysine = [E2 ubiquitin-conjugating enzyme]-L-cysteine + N(6)-ubiquitinyl-[acceptor protein]-L-lysine.. It participates in protein modification; protein ubiquitination. Functionally, may be involved in female gametophyte development. The protein is Putative RING-H2 finger protein ATL49 (ATL49) of Arabidopsis thaliana (Mouse-ear cress).